The sequence spans 220 residues: Adenylate kinase (220 aa).

10–15 (GAGKGT) is an ATP binding site. The NMP stretch occupies residues 30–59 (STGDMLRAAVKAGTPLGVEAKGYMDAGKLV). AMP-binding positions include Thr-31, Arg-36, 57–59 (KLV), 85–88 (GFPR), and Gln-92. Residues 122-159 (GRRTHPASGRTYHVKFNPPKVEGHDDVTGEPLIQRDDD) form an LID region. ATP is bound by residues Arg-123 and 132–133 (TY). AMP is bound by residues Arg-156 and Arg-167. Gly-206 lines the ATP pocket.

The protein belongs to the adenylate kinase family. Monomer.

Its subcellular location is the cytoplasm. The catalysed reaction is AMP + ATP = 2 ADP. It functions in the pathway purine metabolism; AMP biosynthesis via salvage pathway; AMP from ADP: step 1/1. Functionally, catalyzes the reversible transfer of the terminal phosphate group between ATP and AMP. Plays an important role in cellular energy homeostasis and in adenine nucleotide metabolism. The chain is Adenylate kinase from Burkholderia cenocepacia (strain HI2424).